A 209-amino-acid chain; its full sequence is COP9 signalosome complex subunit 8 (209 aa).

One can recognise a PCI domain in the interval 8–179 (ESAFSFKKLL…GALDVSFNKF (172 aa)). Residue serine 175 is modified to Phosphoserine.

The protein belongs to the CSN8 family. Component of the CSN complex, composed of COPS1/GPS1, COPS2, COPS3, COPS4, COPS5, COPS6, COPS7 (COPS7A or COPS7B), COPS8 and COPS9. In the complex, it probably interacts directly with COPS3, COPS4 and COPS7 (COPS7A or COPS7B).

The protein localises to the cytoplasm. Its subcellular location is the nucleus. Component of the COP9 signalosome complex (CSN), a complex involved in various cellular and developmental processes. The CSN complex is an essential regulator of the ubiquitin (Ubl) conjugation pathway by mediating the deneddylation of the cullin subunits of SCF-type E3 ligase complexes, leading to decrease the Ubl ligase activity of SCF-type complexes such as SCF, CSA or DDB2. The complex is also involved in phosphorylation of p53/TP53, c-jun/JUN, IkappaBalpha/NFKBIA, ITPK1 and IRF8/ICSBP, possibly via its association with CK2 and PKD kinases. CSN-dependent phosphorylation of TP53 and JUN promotes and protects degradation by the Ubl system, respectively. The chain is COP9 signalosome complex subunit 8 (COPS8) from Pongo abelii (Sumatran orangutan).